We begin with the raw amino-acid sequence, 275 residues long: Subtilisin (275 aa).

Ca(2+) is bound at residue glutamine 2. Residues 5 to 274 (PYGISQIKAP…KGLINVQAAA (270 aa)) form the Peptidase S8 domain. Aspartate 32 (charge relay system) is an active-site residue. Aspartate 41 provides a ligand contact to Ca(2+). Histidine 64 acts as the Charge relay system in catalysis. Leucine 75, asparagine 77, isoleucine 79, valine 81, alanine 169, tyrosine 171, and threonine 174 together coordinate Ca(2+). The active-site Charge relay system is the serine 221.

The protein belongs to the peptidase S8 family. Ca(2+) is required as a cofactor.

Its subcellular location is the secreted. It catalyses the reaction Hydrolysis of proteins with broad specificity for peptide bonds, and a preference for a large uncharged residue in P1. Hydrolyzes peptide amides.. Subtilisin is an extracellular alkaline serine protease, it catalyzes the hydrolysis of proteins and peptide amides. The sequence is that of Subtilisin (apr) from Bacillus pumilus (Bacillus mesentericus).